Here is a 613-residue protein sequence, read N- to C-terminus: Spastin (613 aa).

The segment at 1-42 is disordered; sequence MNSPGGRGKKKGSAGSSSAPPAAGASPSAPSGPAPPAPPAGA. Topologically, residues 1–61 are cytoplasmic; the sequence is MNSPGGRGKK…KRNLYYFSYP (61 aa). Residues 13–29 show a composition bias toward low complexity; sequence SAGSSSAPPAAGASPSA. The segment covering 30–39 has biased composition (pro residues); that stretch reads PSGPAPPAPP. The segment at residues 62–82 is an intramembrane region (helical); sequence LFAAFALLRFVAFQLGLLVAW. The Cytoplasmic portion of the chain corresponds to 83–613; that stretch reads LCERLSRGAL…WNKDFGDTTV (531 aa). One can recognise an MIT domain in the interval 117-192; the sequence is HKRAFECISM…AMAKDRLQLL (76 aa). Positions 224-312 are disordered; it reads SESGAVPKKK…PAARKKKDTK (89 aa). 3 stretches are compositionally biased toward polar residues: residues 237–257, 264–274, and 281–299; these read THTS…STGL, PSYSGISTASV, and PATS…NKPS. 379–386 provides a ligand contact to ATP; it reads GPPGNGKT.

This sequence belongs to the AAA ATPase family. Spastin subfamily. In terms of assembly, homohexamer. The homohexamer is stabilized by ATP-binding. The homohexamer may adopt a ring conformation through which microtubules pass prior to being severed. Interacts with microtubules.

It localises to the membrane. The protein localises to the cytoplasm. Its subcellular location is the cytoskeleton. The protein resides in the microtubule organizing center. It is found in the centrosome. It localises to the perinuclear region. The protein localises to the nucleus. The enzyme catalyses n ATP + n H2O + a microtubule = n ADP + n phosphate + (n+1) alpha/beta tubulin heterodimers.. Its function is as follows. ATP-dependent microtubule severing protein that specifically recognizes and cuts microtubules that are polyglutamylated. Preferentially recognizes and acts on microtubules decorated with short polyglutamate tails: severing activity increases as the number of glutamates per tubulin rises from one to eight, but decreases beyond this glutamylation threshold. Microtubule severing promotes reorganization of cellular microtubule arrays and the release of microtubules from the centrosome following nucleation. Required for membrane traffic from the endoplasmic reticulum (ER) to the Golgi and for completion of the abscission stage of cytokinesis. Also plays a role in axon growth and the formation of axonal branches. This Gallus gallus (Chicken) protein is Spastin.